A 43-amino-acid polypeptide reads, in one-letter code: Protein PsbN (43 aa).

A helical membrane pass occupies residues 5 to 27; it reads TLVXISISGSLVSFTGYALYTAF.

The protein belongs to the PsbN family.

Its subcellular location is the plastid. It localises to the chloroplast thylakoid membrane. Its function is as follows. May play a role in photosystem I and II biogenesis. The sequence is that of Protein PsbN from Calycanthus floridus (Eastern sweetshrub).